The primary structure comprises 151 residues: UPF0719 transmembrane protein MAP_1032c (151 aa).

4 consecutive transmembrane segments (helical) span residues 20–40 (VATI…FYAV), 60–80 (AVVV…TAIA), 90–110 (LVGV…ALLA), and 130–150 (PGSF…AAAV).

The protein belongs to the UPF0719 family.

The protein localises to the cell membrane. The protein is UPF0719 transmembrane protein MAP_1032c of Mycolicibacterium paratuberculosis (strain ATCC BAA-968 / K-10) (Mycobacterium paratuberculosis).